The primary structure comprises 174 residues: Suppressor of RNA silencing (174 aa).

Residues 86–116 are a coiled coil; sequence HAQLRSLNAELDTLEAREESLRAQIKALSAG.

This sequence belongs to the virgaviridae suppressor of RNA silencing family.

Functionally, suppressor of RNA-mediated gene silencing, also known as post-transcriptional gene silencing (PTGS), a mechanism of plant viral defense that performs sequence-specific inhibition of viral mRNAs expression. This chain is Suppressor of RNA silencing, found in Soil-borne wheat mosaic virus (strain United States/Nebraska/1981) (SBWMV).